A 305-amino-acid chain; its full sequence is Aspartate carbamoyltransferase catalytic subunit (305 aa).

Carbamoyl phosphate contacts are provided by arginine 51 and threonine 52. Lysine 79 provides a ligand contact to L-aspartate. Carbamoyl phosphate contacts are provided by arginine 101, histidine 129, and glutamine 132. Positions 165 and 220 each coordinate L-aspartate. The carbamoyl phosphate site is built by glycine 258 and proline 259.

The protein belongs to the aspartate/ornithine carbamoyltransferase superfamily. ATCase family. In terms of assembly, heterododecamer (2C3:3R2) of six catalytic PyrB chains organized as two trimers (C3), and six regulatory PyrI chains organized as three dimers (R2).

The enzyme catalyses carbamoyl phosphate + L-aspartate = N-carbamoyl-L-aspartate + phosphate + H(+). It participates in pyrimidine metabolism; UMP biosynthesis via de novo pathway; (S)-dihydroorotate from bicarbonate: step 2/3. Catalyzes the condensation of carbamoyl phosphate and aspartate to form carbamoyl aspartate and inorganic phosphate, the committed step in the de novo pyrimidine nucleotide biosynthesis pathway. The sequence is that of Aspartate carbamoyltransferase catalytic subunit from Rubrobacter xylanophilus (strain DSM 9941 / JCM 11954 / NBRC 16129 / PRD-1).